The primary structure comprises 449 residues: L-seryl-tRNA(Sec) selenium transferase (449 aa).

Lys-286 is modified (N6-(pyridoxal phosphate)lysine).

The protein belongs to the SelA family. Pyridoxal 5'-phosphate is required as a cofactor.

It is found in the cytoplasm. The catalysed reaction is L-seryl-tRNA(Sec) + selenophosphate + H(+) = L-selenocysteinyl-tRNA(Sec) + phosphate. The protein operates within aminoacyl-tRNA biosynthesis; selenocysteinyl-tRNA(Sec) biosynthesis; selenocysteinyl-tRNA(Sec) from L-seryl-tRNA(Sec) (bacterial route): step 1/1. In terms of biological role, converts seryl-tRNA(Sec) to selenocysteinyl-tRNA(Sec) required for selenoprotein biosynthesis. The protein is L-seryl-tRNA(Sec) selenium transferase of Sulfurimonas denitrificans (strain ATCC 33889 / DSM 1251) (Thiomicrospira denitrificans (strain ATCC 33889 / DSM 1251)).